A 291-amino-acid polypeptide reads, in one-letter code: Ribosomal RNA small subunit methyltransferase A (291 aa).

Asn27, Leu29, Gly54, Glu75, Asp100, and Asn125 together coordinate S-adenosyl-L-methionine.

Belongs to the class I-like SAM-binding methyltransferase superfamily. rRNA adenine N(6)-methyltransferase family. RsmA subfamily.

It is found in the cytoplasm. It carries out the reaction adenosine(1518)/adenosine(1519) in 16S rRNA + 4 S-adenosyl-L-methionine = N(6)-dimethyladenosine(1518)/N(6)-dimethyladenosine(1519) in 16S rRNA + 4 S-adenosyl-L-homocysteine + 4 H(+). Its function is as follows. Specifically dimethylates two adjacent adenosines (A1518 and A1519) in the loop of a conserved hairpin near the 3'-end of 16S rRNA in the 30S particle. May play a critical role in biogenesis of 30S subunits. The protein is Ribosomal RNA small subunit methyltransferase A of Streptococcus mutans serotype c (strain ATCC 700610 / UA159).